A 401-amino-acid chain; its full sequence is Dual-specificity RNA methyltransferase RlmN (401 aa).

Glutamate 114 (proton acceptor) is an active-site residue. The region spanning 120–365 (DKTRGTLCVS…TMVRRTRGDD (246 aa)) is the Radical SAM core domain. Cysteine 127 and cysteine 370 form a disulfide bridge. The [4Fe-4S] cluster site is built by cysteine 134, cysteine 138, and cysteine 141. S-adenosyl-L-methionine contacts are provided by residues 187–188 (GE), serine 219, 241–243 (SLH), and asparagine 327. The S-methylcysteine intermediate role is filled by cysteine 370.

This sequence belongs to the radical SAM superfamily. RlmN family. It depends on [4Fe-4S] cluster as a cofactor.

It localises to the cytoplasm. It carries out the reaction adenosine(2503) in 23S rRNA + 2 reduced [2Fe-2S]-[ferredoxin] + 2 S-adenosyl-L-methionine = 2-methyladenosine(2503) in 23S rRNA + 5'-deoxyadenosine + L-methionine + 2 oxidized [2Fe-2S]-[ferredoxin] + S-adenosyl-L-homocysteine. The catalysed reaction is adenosine(37) in tRNA + 2 reduced [2Fe-2S]-[ferredoxin] + 2 S-adenosyl-L-methionine = 2-methyladenosine(37) in tRNA + 5'-deoxyadenosine + L-methionine + 2 oxidized [2Fe-2S]-[ferredoxin] + S-adenosyl-L-homocysteine. Specifically methylates position 2 of adenine 2503 in 23S rRNA and position 2 of adenine 37 in tRNAs. m2A2503 modification seems to play a crucial role in the proofreading step occurring at the peptidyl transferase center and thus would serve to optimize ribosomal fidelity. This is Dual-specificity RNA methyltransferase RlmN from Stenotrophomonas maltophilia (strain K279a).